Consider the following 369-residue polypeptide: Phospho-N-acetylmuramoyl-pentapeptide-transferase (369 aa).

The next 10 membrane-spanning stretches (helical) occupy residues 3 to 23, 53 to 73, 81 to 101, 118 to 138, 162 to 182, 198 to 218, 240 to 260, 267 to 287, 290 to 310, and 347 to 367; these read ALLG…PLFI, GGIV…LLTW, VTPS…VGFL, WQKI…AITL, FMAL…CLIV, LAAG…FWQF, PLDL…FLWW, IFMG…LAIL, TELL…SVVL, and FWII…LEWI.

The protein belongs to the glycosyltransferase 4 family. MraY subfamily. It depends on Mg(2+) as a cofactor.

The protein localises to the cell membrane. It catalyses the reaction UDP-N-acetyl-alpha-D-muramoyl-L-alanyl-gamma-D-glutamyl-meso-2,6-diaminopimeloyl-D-alanyl-D-alanine + di-trans,octa-cis-undecaprenyl phosphate = di-trans,octa-cis-undecaprenyl diphospho-N-acetyl-alpha-D-muramoyl-L-alanyl-D-glutamyl-meso-2,6-diaminopimeloyl-D-alanyl-D-alanine + UMP. It participates in cell wall biogenesis; peptidoglycan biosynthesis. Catalyzes the initial step of the lipid cycle reactions in the biosynthesis of the cell wall peptidoglycan: transfers peptidoglycan precursor phospho-MurNAc-pentapeptide from UDP-MurNAc-pentapeptide onto the lipid carrier undecaprenyl phosphate, yielding undecaprenyl-pyrophosphoryl-MurNAc-pentapeptide, known as lipid I. The protein is Phospho-N-acetylmuramoyl-pentapeptide-transferase of Clavibacter sepedonicus (Clavibacter michiganensis subsp. sepedonicus).